Reading from the N-terminus, the 423-residue chain is tRNA(Ile)-lysidine synthase (423 aa).

Position 18–23 (18–23 (SGGADS)) interacts with ATP.

The protein belongs to the tRNA(Ile)-lysidine synthase family.

It localises to the cytoplasm. The catalysed reaction is cytidine(34) in tRNA(Ile2) + L-lysine + ATP = lysidine(34) in tRNA(Ile2) + AMP + diphosphate + H(+). Its function is as follows. Ligates lysine onto the cytidine present at position 34 of the AUA codon-specific tRNA(Ile) that contains the anticodon CAU, in an ATP-dependent manner. Cytidine is converted to lysidine, thus changing the amino acid specificity of the tRNA from methionine to isoleucine. The chain is tRNA(Ile)-lysidine synthase from Aromatoleum aromaticum (strain DSM 19018 / LMG 30748 / EbN1) (Azoarcus sp. (strain EbN1)).